Here is a 162-residue protein sequence, read N- to C-terminus: Ribosome maturation factor RimP (162 aa).

The protein belongs to the RimP family.

Its subcellular location is the cytoplasm. Functionally, required for maturation of 30S ribosomal subunits. The chain is Ribosome maturation factor RimP from Syntrophotalea carbinolica (strain DSM 2380 / NBRC 103641 / GraBd1) (Pelobacter carbinolicus).